Reading from the N-terminus, the 264-residue chain is MGLHFSVLASGSTGNMLYVGTDEKKLLVDAGLSGKATEALFKQAELNINDVSGILVTHEHSDHIKGLGVLARKYDLPVYANEKTWNAMEHLIGNIPTDQKFIFSVGDVKTFGDIEVESFGVSHDAAEPMFYAFHNNNRKLALITDTGYVSDRMKGVIKGANAFVFESNHDVEMLRMGRYPWSIKRRILSDVGHVCNEDAALAMADVITDETKHIYLAHLSLDNNMKELARMSVSQVLEEKGFGVGEAFEIHDTDPKMPTKIQYV.

Residues histidine 58, histidine 60, aspartate 62, histidine 63, and aspartate 145 each coordinate a divalent metal cation.

The protein belongs to the metallo-beta-lactamase superfamily. Fe(2+) is required as a cofactor. It depends on Zn(2+) as a cofactor. The cofactor is Mn(2+).

5'-&gt;3' double-stranded DNA exonuclease. May play a role in mutation mismatch repair (MMR). Required for accurate coordination of cell division with DNA replication. May play a role in cell wall metabolism. The protein is Exodeoxyribonuclease YycJ of Bacillus anthracis.